We begin with the raw amino-acid sequence, 521 residues long: Medium/long-chain-fatty-acid--[acyl-carrier-protein] ligase MbtM (521 aa).

The protein belongs to the ATP-dependent AMP-binding enzyme family.

It catalyses the reaction a long-chain fatty acid + holo-[ACP] + ATP = a long-chain fatty acyl-[ACP] + AMP + diphosphate. The catalysed reaction is a medium-chain fatty acid + holo-[ACP] + ATP = a medium-chain fatty acyl-[ACP] + AMP + diphosphate. It functions in the pathway siderophore biosynthesis; mycobactin biosynthesis. Activates lipidic moieties required for mycobactin biosynthesis. Converts medium- to long-chain aliphatic fatty acids into acyl adenylate, which is further transferred on to the phosphopantetheine arm of the carrier protein MbtL. This Mycobacterium tuberculosis (strain CDC 1551 / Oshkosh) protein is Medium/long-chain-fatty-acid--[acyl-carrier-protein] ligase MbtM (mbtM).